Reading from the N-terminus, the 65-residue chain is Small hydrophobic protein (65 aa).

Residues 1–20 (MGNTSITIEFTSKFWPYFTL) are Intravirion-facing. Positions 6 to 15 (ITIEFTSKFW) are interaction with host BCAP31. The helical; Signal-anchor for type II membrane protein transmembrane segment at 21–44 (IHMILTPISLLIIITIMIAILNKL) threads the bilayer. An interaction with small-molecule inhibitor region spans residues 38-43 (IAILNK). The Virion surface portion of the chain corresponds to 45–65 (SEHKTFCNKTLELGQMYQINT). The N-linked (GlcNAc...) asparagine; by host glycan is linked to asparagine 52.

It belongs to the orthopneumovirus small hydrophobic protein family. As to quaternary structure, homopentamer forming a funnel-like pore. Interacts with glycoprotein G; this interaction occurs on the surface of virion particles and infected cells. Interacts with host BCAP31 (via C-terminus); this interaction is direct. In terms of processing, four species of SH have been detected in infected cell cytoplasm: a 7.5 kDa non-glycosylated form (SH0), a 13-15 kDa form that contains one or two N-linked carbohydrate side chains of the high-mannose type (SHg), a 21-30 kDa polylactosaminoglycan-modified form of the protein (SHp), and the isoform generated by alternative translational initiation. Of these different forms, SH0 is by far the most abundant protein detected during virus infection. Post-translationally, tyrosine phosphorylated.

The protein resides in the virion membrane. Its subcellular location is the host cell membrane. It is found in the host Golgi apparatus membrane. The protein localises to the host endoplasmic reticulum membrane. With respect to regulation, channel activity is inhibited by copper. Also inhibited by small-molecule pyronin B. Its function is as follows. Viroporin that forms a homopentameric ion channel displaying low ion selectivity. May play a role in virus morphogenesis and pathogenicity at various stages of the viral life cycle. Accumulates at the membrane of the Golgi apparatus in infected cells and may facilitate virus release by modifying the secretory pathway. May enhance host membrane permeability and disrupt cellular ion homeostasis, which can be sensed as damage-associated molecular patterns/danger signals, triggering NLRP3 inflammasome activation and inflammatory immune response. Also inhibits host TNFA-mediated signaling pathway and may delay apoptosis, allowing time for the virus to replicate. In Human respiratory syncytial virus B (strain 18537), this protein is Small hydrophobic protein.